The following is a 355-amino-acid chain: Blue-sensitive opsin (355 aa).

Residues 1 to 36 are Extracellular-facing; sequence MNGTEGINFYVPLSNKTGLVRSPFEYPQYYLAEPWK. Residues N2 and N15 are each glycosylated (N-linked (GlcNAc...) asparagine). A helical transmembrane segment spans residues 37–61; sequence YKVVCCYIFFLIFTGLPINILTLLV. The Cytoplasmic portion of the chain corresponds to 62-73; the sequence is TFKHKKLRQPLN. The chain crosses the membrane as a helical span at residues 74–98; it reads YILVNLAVADLFMACFGFTVTFYTA. Topologically, residues 99–113 are extracellular; it reads WNGYFIFGPIGCAIE. C110 and C187 form a disulfide bridge. The chain crosses the membrane as a helical span at residues 114-133; it reads GFFATLGGQVALWSLVVLAI. The Cytoplasmic portion of the chain corresponds to 134 to 152; sequence ERYIVVCKPMGNFRFSATH. Residues 153-176 traverse the membrane as a helical segment; sequence ALMGISFTWFMSFSCAAPPLLGWS. Topologically, residues 177–202 are extracellular; the sequence is RYIPEGMQCSCGPDYYTLNPDYHNES. N-linked (GlcNAc...) asparagine glycosylation occurs at N200. The chain crosses the membrane as a helical span at residues 203 to 230; sequence YVLYMFGVHFVIPVVVIFFSYGRLICKV. The Cytoplasmic portion of the chain corresponds to 231-252; that stretch reads REAAAQQQESASTQKAEREVTR. A helical membrane pass occupies residues 253–276; it reads MVILMVLGFLLAWTPYAMVAFWIF. At 277-284 the chain is on the extracellular side; it reads TNKGVDFS. A helical membrane pass occupies residues 285-309; sequence ATLMSVPAFFSKSSSLYNPIIYVLM. K296 bears the N6-(retinylidene)lysine mark. The Cytoplasmic portion of the chain corresponds to 310-355; the sequence is NKQFRNCMITTICCGKNPFGDEDVSSSVSQSKTEVSSVSSSQVSPA. 2 S-palmitoyl cysteine lipidation sites follow: C322 and C323. Positions 332–355 are disordered; sequence DVSSSVSQSKTEVSSVSSSQVSPA. Positions 334 to 355 are enriched in low complexity; the sequence is SSSVSQSKTEVSSVSSSQVSPA.

Belongs to the G-protein coupled receptor 1 family. Opsin subfamily. In terms of processing, phosphorylated on some or all of the serine and threonine residues present in the C-terminal region.

It localises to the membrane. Functionally, visual pigments are the light-absorbing molecules that mediate vision. They consist of an apoprotein, opsin, covalently linked to cis-retinal. This opsin uses a vitamin A2 chromophore. The chain is Blue-sensitive opsin from Anolis carolinensis (Green anole).